Consider the following 354-residue polypeptide: V-type proton ATPase subunit C (354 aa).

Belongs to the V-ATPase C subunit family. V-ATPase is a heteromultimeric enzyme composed of a peripheral catalytic V1 complex (components A to H) attached to an integral membrane V0 proton pore complex (components: a, c, c', c'' and d).

Its subcellular location is the vacuole membrane. Subunit of the peripheral V1 complex of vacuolar ATPase. Subunit C is necessary for the assembly of the catalytic sector of the enzyme and is likely to have a specific function in its catalytic activity. V-ATPase is responsible for acidifying a variety of intracellular compartments in eukaryotic cells. This is V-type proton ATPase subunit C (VATC) from Hordeum vulgare (Barley).